The chain runs to 201 residues: MIGRLRGTLAEKQPPHMILDVNGIGYEVEVPMTTLYRLPAVGEPVTLHTHLVVREDAQLLYGFAEKRERELFRELIRLNGVGPKLALALMSGLEVDELVRCVQAQDTSVLVRIPGVGKKTAERLLVELKDRFKAWESMPAIATLVVEPGSKTAVTSAENDAVSALISLGFKPQEASRAVSAIQEENLSSEEMIRRALKGMV.

Positions 1–64 are domain I; that stretch reads MIGRLRGTLA…EDAQLLYGFA (64 aa). Residues 65–143 form a domain II region; the sequence is EKRERELFRE…AWESMPAIAT (79 aa). The segment at 144–152 is flexible linker; sequence LVVEPGSKT. The interval 153–201 is domain III; that stretch reads AVTSAENDAVSALISLGFKPQEASRAVSAIQEENLSSEEMIRRALKGMV.

It belongs to the RuvA family. Homotetramer. Forms an RuvA(8)-RuvB(12)-Holliday junction (HJ) complex. HJ DNA is sandwiched between 2 RuvA tetramers; dsDNA enters through RuvA and exits via RuvB. An RuvB hexamer assembles on each DNA strand where it exits the tetramer. Each RuvB hexamer is contacted by two RuvA subunits (via domain III) on 2 adjacent RuvB subunits; this complex drives branch migration. In the full resolvosome a probable DNA-RuvA(4)-RuvB(12)-RuvC(2) complex forms which resolves the HJ.

Its subcellular location is the cytoplasm. The RuvA-RuvB-RuvC complex processes Holliday junction (HJ) DNA during genetic recombination and DNA repair, while the RuvA-RuvB complex plays an important role in the rescue of blocked DNA replication forks via replication fork reversal (RFR). RuvA specifically binds to HJ cruciform DNA, conferring on it an open structure. The RuvB hexamer acts as an ATP-dependent pump, pulling dsDNA into and through the RuvAB complex. HJ branch migration allows RuvC to scan DNA until it finds its consensus sequence, where it cleaves and resolves the cruciform DNA. In Stutzerimonas stutzeri (strain A1501) (Pseudomonas stutzeri), this protein is Holliday junction branch migration complex subunit RuvA.